Reading from the N-terminus, the 233-residue chain is uncharacterized protein (233 aa).

Residues 21-43 (RWRTATSADHPRRGRPAAQAVRR) are disordered.

This is an uncharacterized protein from Mycobacterium tuberculosis (strain CDC 1551 / Oshkosh).